A 228-amino-acid chain; its full sequence is Chaperone protein FanE (228 aa).

Positions 1-19 (MNKFISIIALCVFSSYANA) are cleaved as a signal peptide. Cys-157 and Cys-198 are disulfide-bonded.

The protein belongs to the periplasmic pilus chaperone family.

Its subcellular location is the periplasm. Its function is as follows. Mediates assembly of pili by forming soluble multimeric complexes with pili subunits as an intermediate step in the assembly process. This protein is involved in K99 pili assembly. This chain is Chaperone protein FanE (fanE), found in Escherichia coli.